A 426-amino-acid polypeptide reads, in one-letter code: Enolase (426 aa).

Residue Gln-162 participates in (2R)-2-phosphoglycerate binding. Residue Glu-204 is the Proton donor of the active site. Residues Asp-241, Glu-288, and Asp-315 each coordinate Mg(2+). Residues Lys-340, Arg-369, Ser-370, and Lys-391 each coordinate (2R)-2-phosphoglycerate. The active-site Proton acceptor is the Lys-340.

Belongs to the enolase family. Mg(2+) is required as a cofactor.

It is found in the cytoplasm. The protein resides in the secreted. Its subcellular location is the cell surface. The catalysed reaction is (2R)-2-phosphoglycerate = phosphoenolpyruvate + H2O. Its pathway is carbohydrate degradation; glycolysis; pyruvate from D-glyceraldehyde 3-phosphate: step 4/5. Functionally, catalyzes the reversible conversion of 2-phosphoglycerate (2-PG) into phosphoenolpyruvate (PEP). It is essential for the degradation of carbohydrates via glycolysis. The polypeptide is Enolase (Bacteroides thetaiotaomicron (strain ATCC 29148 / DSM 2079 / JCM 5827 / CCUG 10774 / NCTC 10582 / VPI-5482 / E50)).